Consider the following 91-residue polypeptide: MPRPTGKKFDKRRQQQNPLFKRKKFCRFTAAGVEQIDYKDIDTLKDFIGENGKITPARLTGTKAHYQRQLDTAIKRARFLALMPYTDQHKA.

It belongs to the bacterial ribosomal protein bS18 family. In terms of assembly, part of the 30S ribosomal subunit. Forms a tight heterodimer with protein bS6.

Binds as a heterodimer with protein bS6 to the central domain of the 16S rRNA, where it helps stabilize the platform of the 30S subunit. This is Small ribosomal subunit protein bS18 from Paraburkholderia phymatum (strain DSM 17167 / CIP 108236 / LMG 21445 / STM815) (Burkholderia phymatum).